The primary structure comprises 456 residues: Hydroxymethylglutaryl-CoA synthase ERG13 (456 aa).

Ala35 serves as a coordination point for (3S)-3-hydroxy-3-methylglutaryl-CoA. Glu86 functions as the Proton donor/acceptor in the catalytic mechanism. Residues Cys118, Asn156, Thr160, Ser210, His259, Lys268, Asn336, and Ser370 each coordinate (3S)-3-hydroxy-3-methylglutaryl-CoA. Cys118 functions as the Acyl-thioester intermediate in the catalytic mechanism. His259 (proton donor/acceptor) is an active-site residue.

This sequence belongs to the thiolase-like superfamily. HMG-CoA synthase family.

The catalysed reaction is acetoacetyl-CoA + acetyl-CoA + H2O = (3S)-3-hydroxy-3-methylglutaryl-CoA + CoA + H(+). The protein operates within metabolic intermediate biosynthesis; (R)-mevalonate biosynthesis; (R)-mevalonate from acetyl-CoA: step 2/3. Its function is as follows. Hydroxymethylglutaryl-CoA synthase; part of the first module of ergosterol biosynthesis pathway that includes the early steps of the pathway, conserved across all eukaryotes, and which results in the formation of mevalonate from acetyl-coenzyme A (acetyl-CoA). ERG13 condenses acetyl-CoA with acetoacetyl-CoA to form hydroxymethylglutaryl-CoA (HMG-CoA). The first module starts with the action of the cytosolic acetyl-CoA acetyltransferase ERG10B that catalyzes the formation of acetoacetyl-CoA. The hydroxymethylglutaryl-CoA synthases ERG13 then condenses acetyl-CoA with acetoacetyl-CoA to form HMG-CoA. The rate-limiting step of the early module is the reduction to mevalonate by the 3-hydroxy-3-methylglutaryl-coenzyme A (HMG-CoA) reductases HMG1. This chain is Hydroxymethylglutaryl-CoA synthase ERG13, found in Gibberella zeae (strain ATCC MYA-4620 / CBS 123657 / FGSC 9075 / NRRL 31084 / PH-1) (Wheat head blight fungus).